A 129-amino-acid polypeptide reads, in one-letter code: Cytochrome c oxidase subunit 5B, mitochondrial (129 aa).

A mitochondrion-targeting transit peptide spans 1-31; that stretch reads MASRLLRGAGALAAQALRARGPSGAAAVRSM. 2 positions are modified to N6-acetyllysine: Lys-68 and Lys-86. Zn(2+)-binding residues include Cys-91, Cys-93, Cys-113, and Cys-116. Lys-121 carries the N6-acetyllysine modification.

The protein belongs to the cytochrome c oxidase subunit 5B family. As to quaternary structure, component of the cytochrome c oxidase (complex IV, CIV), a multisubunit enzyme composed of 14 subunits. The complex is composed of a catalytic core of 3 subunits MT-CO1, MT-CO2 and MT-CO3, encoded in the mitochondrial DNA, and 11 supernumerary subunits COX4I, COX5A, COX5B, COX6A, COX6B, COX6C, COX7A, COX7B, COX7C, COX8 and NDUFA4, which are encoded in the nuclear genome. The complex exists as a monomer or a dimer and forms supercomplexes (SCs) in the inner mitochondrial membrane with NADH-ubiquinone oxidoreductase (complex I, CI) and ubiquinol-cytochrome c oxidoreductase (cytochrome b-c1 complex, complex III, CIII), resulting in different assemblies (supercomplex SCI(1)III(2)IV(1) and megacomplex MCI(2)III(2)IV(2)).

Its subcellular location is the mitochondrion inner membrane. Its pathway is energy metabolism; oxidative phosphorylation. Component of the cytochrome c oxidase, the last enzyme in the mitochondrial electron transport chain which drives oxidative phosphorylation. The respiratory chain contains 3 multisubunit complexes succinate dehydrogenase (complex II, CII), ubiquinol-cytochrome c oxidoreductase (cytochrome b-c1 complex, complex III, CIII) and cytochrome c oxidase (complex IV, CIV), that cooperate to transfer electrons derived from NADH and succinate to molecular oxygen, creating an electrochemical gradient over the inner membrane that drives transmembrane transport and the ATP synthase. Cytochrome c oxidase is the component of the respiratory chain that catalyzes the reduction of oxygen to water. Electrons originating from reduced cytochrome c in the intermembrane space (IMS) are transferred via the dinuclear copper A center (CU(A)) of subunit 2 and heme A of subunit 1 to the active site in subunit 1, a binuclear center (BNC) formed by heme A3 and copper B (CU(B)). The BNC reduces molecular oxygen to 2 water molecules using 4 electrons from cytochrome c in the IMS and 4 protons from the mitochondrial matrix. The sequence is that of Cytochrome c oxidase subunit 5B, mitochondrial (COX5B) from Pongo abelii (Sumatran orangutan).